Reading from the N-terminus, the 552-residue chain is TBCC domain-containing protein 1 (552 aa).

Residues 304–435 form the C-CAP/cofactor C-like domain; it reads PRLHRIVVMS…LEDHMARTGL (132 aa).

This sequence belongs to the TBCC family. In terms of tissue distribution, expressed in brain and testis (at protein level).

It localises to the cytoplasm. It is found in the cytoskeleton. Its subcellular location is the microtubule organizing center. The protein resides in the centrosome. The protein localises to the spindle pole. Plays a role in the regulation of centrosome and Golgi apparatus positioning, with consequences on cell shape and cell migration. This Mus musculus (Mouse) protein is TBCC domain-containing protein 1 (Tbccd1).